We begin with the raw amino-acid sequence, 736 residues long: Phosphoribosylformylglycinamidine synthase subunit PurL (736 aa).

The active site involves histidine 48. The ATP site is built by tyrosine 51 and lysine 90. Residue glutamate 92 coordinates Mg(2+). Substrate is bound by residues serine 93–histidine 96 and arginine 115. The active-site Proton acceptor is the histidine 94. A Mg(2+)-binding site is contributed by aspartate 116. Glutamine 239 is a binding site for substrate. Aspartate 267 contacts Mg(2+). Glutamate 311 to glutamine 313 is a substrate binding site. ATP-binding residues include aspartate 492 and glycine 529. Residue asparagine 530 participates in Mg(2+) binding. Residue serine 532 participates in substrate binding.

Belongs to the FGAMS family. As to quaternary structure, monomer. Part of the FGAM synthase complex composed of 1 PurL, 1 PurQ and 2 PurS subunits.

It is found in the cytoplasm. The catalysed reaction is N(2)-formyl-N(1)-(5-phospho-beta-D-ribosyl)glycinamide + L-glutamine + ATP + H2O = 2-formamido-N(1)-(5-O-phospho-beta-D-ribosyl)acetamidine + L-glutamate + ADP + phosphate + H(+). Its pathway is purine metabolism; IMP biosynthesis via de novo pathway; 5-amino-1-(5-phospho-D-ribosyl)imidazole from N(2)-formyl-N(1)-(5-phospho-D-ribosyl)glycinamide: step 1/2. In terms of biological role, part of the phosphoribosylformylglycinamidine synthase complex involved in the purines biosynthetic pathway. Catalyzes the ATP-dependent conversion of formylglycinamide ribonucleotide (FGAR) and glutamine to yield formylglycinamidine ribonucleotide (FGAM) and glutamate. The FGAM synthase complex is composed of three subunits. PurQ produces an ammonia molecule by converting glutamine to glutamate. PurL transfers the ammonia molecule to FGAR to form FGAM in an ATP-dependent manner. PurS interacts with PurQ and PurL and is thought to assist in the transfer of the ammonia molecule from PurQ to PurL. This is Phosphoribosylformylglycinamidine synthase subunit PurL from Bradyrhizobium diazoefficiens (strain JCM 10833 / BCRC 13528 / IAM 13628 / NBRC 14792 / USDA 110).